Here is a 406-residue protein sequence, read N- to C-terminus: Argininosuccinate synthase (406 aa).

Residues 12–20 and alanine 39 contribute to the ATP site; that span reads AYSGGLDTS. L-citrulline contacts are provided by tyrosine 90 and serine 95. Glycine 120 is a binding site for ATP. L-aspartate is bound by residues threonine 122, asparagine 126, and aspartate 127. Asparagine 126 contacts L-citrulline. The L-citrulline site is built by arginine 130, serine 179, serine 188, glutamate 264, and tyrosine 276.

This sequence belongs to the argininosuccinate synthase family. Type 1 subfamily. In terms of assembly, homotetramer.

It localises to the cytoplasm. It catalyses the reaction L-citrulline + L-aspartate + ATP = 2-(N(omega)-L-arginino)succinate + AMP + diphosphate + H(+). The protein operates within amino-acid biosynthesis; L-arginine biosynthesis; L-arginine from L-ornithine and carbamoyl phosphate: step 2/3. In Geotalea uraniireducens (strain Rf4) (Geobacter uraniireducens), this protein is Argininosuccinate synthase.